The sequence spans 617 residues: MFRTAVMMAASLALTGAVVAHAYYLKHQFYPTVVYLTKSSPSMAVLYIQAFVLVFLLGKVMGKVFFGQLRAAEMEHLLERSWYAVTETCLAFTVFRDDFSPRFVALFTLLLFLKCFHWLAEDRVDFMERSPNISWLFHCRIVSLMFLLGILDFLFVSHAYHSILTRGASVQLVFGFEYAILMTMVLTIFIKYVLHSVDLQSENPWDNKAVYMLYTELFTGFIKVLLYMAFMTIMIKVHTFPLFAIRPMYLAMRQFKKAVTDAIMSRRAIRNMNTLYPDATPEELQAMDNVCIICREEMVTGAKRLPCNHIFHTSCLRSWFQRQQTCPTCRMDVLRASLPAQSPPPPEPADQGPPPAPHPPPLLPQPPNFPQGLLPPFPPGMFPLWPPMGPFPPVPPPPSSGEAVAPPSTSAAALSRPSGAATTTAAGTSATAASATASGPGSGSAPEAGPAPGFPFPPPWMGMPLPPPFAFPPMPVPPAGFAGLTPEELRALEGHERQHLEARLQSLRNIHTLLDAAMLQINQYLTVLASLGPPRPATSVNSTEETATTVVAAASSTSIPSSEATTPTPGASPPAPEMERPPAPESVGTEEMPEDGEPDAAELRRRRLQKLESPVAH.

Residues 1 to 4 are Cytoplasmic-facing; sequence MFRT. Residues 1–84 are necessary and sufficient for SEL1L interaction; sequence MFRTAVMMAA…EHLLERSWYA (84 aa). The involved in FAM8A1 interaction stretch occupies residues 1–251; the sequence is MFRTAVMMAA…LFAIRPMYLA (251 aa). A helical transmembrane segment spans residues 5–25; sequence AVMMAASLALTGAVVAHAYYL. Topologically, residues 26 to 41 are lumenal; it reads KHQFYPTVVYLTKSSP. Residues 42–62 form a helical membrane-spanning segment; it reads SMAVLYIQAFVLVFLLGKVMG. The Cytoplasmic segment spans residues 63 to 98; the sequence is KVFFGQLRAAEMEHLLERSWYAVTETCLAFTVFRDD. A helical transmembrane segment spans residues 99 to 119; sequence FSPRFVALFTLLLFLKCFHWL. Topologically, residues 120–140 are lumenal; that stretch reads AEDRVDFMERSPNISWLFHCR. The chain crosses the membrane as a helical span at residues 141–161; that stretch reads IVSLMFLLGILDFLFVSHAYH. Over 162–169 the chain is Cytoplasmic; it reads SILTRGAS. The chain crosses the membrane as a helical span at residues 170–190; the sequence is VQLVFGFEYAILMTMVLTIFI. Topologically, residues 191-224 are lumenal; the sequence is KYVLHSVDLQSENPWDNKAVYMLYTELFTGFIKV. Residues 225-245 form a helical membrane-spanning segment; it reads LLYMAFMTIMIKVHTFPLFAI. Positions 236–270 are interaction with p53/TP53; the sequence is KVHTFPLFAIRPMYLAMRQFKKAVTDAIMSRRAIR. Topologically, residues 246-617 are cytoplasmic; the sequence is RPMYLAMRQF…LQKLESPVAH (372 aa). 8 residues coordinate Zn(2+): Cys-291, Cys-294, Cys-307, His-309, His-312, Cys-315, Cys-326, and Cys-329. The RING-type; atypical zinc finger occupies 291–330; the sequence is CIICREEMVTGAKRLPCNHIFHTSCLRSWFQRQQTCPTCR. Disordered stretches follow at residues 337–375, 393–453, and 535–617; these read SLPA…GLLP, PVPP…PAPG, and RPAT…PVAH. Residues 341–375 show a composition bias toward pro residues; sequence QSPPPPEPADQGPPPAPHPPPLLPQPPNFPQGLLP. Residues 417–451 are compositionally biased toward low complexity; the sequence is PSGAATTTAAGTSATAASATASGPGSGSAPEAGPA. Positions 480–535 are HAF-H domain; necessary to form higher-order Hrd1 complexes; it reads GFAGLTPEELRALEGHERQHLEARLQSLRNIHTLLDAAMLQINQYLTVLASLGPPR. Low complexity predominate over residues 537–569; that stretch reads ATSVNSTEETATTVVAAASSTSIPSSEATTPTP. Over residues 591–600 the composition is skewed to acidic residues; it reads EMPEDGEPDA. A Phosphoserine modification is found at Ser-613.

Belongs to the HRD1 family. As to quaternary structure, homodimer. Interacts with p53/TP53. Interacts with HTT. Component of the HRD1 complex, which comprises at least SYNV1/HRD1, DERL1/2, FAM8A1, HERPUD1/HERP, OS9, SEL1L and UBE2J1. FAM8A1 is stabilized by interaction with SYNV1, which prevents its proteasomal degradation. OS9 and UBE2J1 recruitment to the complex may be mediated by SEL1L. SYNV1 assembles with SEL1L and FAM8A1 through its transmembrane domains, but interaction with its cytoplasmic domain is required to confer stability to FAM8A1 and enhance recruitment of HERPUD1. The HRD1 complex also associates with VIMP and may transfer misfolded proteins from the endoplasmic reticulum to VCP. May form a complex with ERLEC1, HSPA5, OS9 and SEL1L. Interacts with VCP. Interacts with UBXN6. Interacts with BAG6. Interacts with NFE2L1. Interacts (via N-terminus) with components of the pre-B cell receptor, including IGLL1 and VPREB1. Interacts with CREB3L3; this interaction leads to CREB3L3 ubiquitination and proteasomal degradation. In terms of processing, not N-glycosylated. Auto-ubiquitinated. Deubiquitinated by USP19. Ubiquitously expressed, with highest levels in liver and kidney (at protein level). Up-regulated in synovial tissues from patients with rheumatoid arthritis (at protein level).

The protein resides in the endoplasmic reticulum membrane. The catalysed reaction is S-ubiquitinyl-[E2 ubiquitin-conjugating enzyme]-L-cysteine + [acceptor protein]-L-lysine = [E2 ubiquitin-conjugating enzyme]-L-cysteine + N(6)-ubiquitinyl-[acceptor protein]-L-lysine.. It functions in the pathway protein modification; protein ubiquitination. Functionally, E3 ubiquitin-protein ligase which accepts ubiquitin specifically from endoplasmic reticulum-associated UBC7 E2 ligase and transfers it to substrates, promoting their degradation. Component of the endoplasmic reticulum quality control (ERQC) system also called ER-associated degradation (ERAD) involved in ubiquitin-dependent degradation of misfolded endoplasmic reticulum proteins. Also promotes the degradation of normal but naturally short-lived proteins such as SGK. Protects cells from ER stress-induced apoptosis. Protects neurons from apoptosis induced by polyglutamine-expanded huntingtin (HTT) or unfolded GPR37 by promoting their degradation. Sequesters p53/TP53 in the cytoplasm and promotes its degradation, thereby negatively regulating its biological function in transcription, cell cycle regulation and apoptosis. Mediates the ubiquitination and subsequent degradation of cytoplasmic NFE2L1. During the early stage of B cell development, required for degradation of the pre-B cell receptor (pre-BCR) complex, hence supporting further differentiation into mature B cells. This is E3 ubiquitin-protein ligase synoviolin from Homo sapiens (Human).